The chain runs to 247 residues: UPF0259 membrane protein BUAP5A_271 (247 aa).

6 consecutive transmembrane segments (helical) span residues 20 to 40 (IGAIFFISIFATFMNILIDMF), 85 to 105 (IMESLISKTTLLGSIIILISV), 114 to 134 (IVSSIRTFFLFFPSLFILNFL), 137 to 157 (FIIQIGFMLLIIPGILLSIIL), 188 to 208 (IIGPGVLFWMCGKFILTMLLA), and 218 to 238 (LFLISNISMNILFSILIIYLF).

It belongs to the UPF0259 family.

The protein resides in the cell membrane. This chain is UPF0259 membrane protein BUAP5A_271, found in Buchnera aphidicola subsp. Acyrthosiphon pisum (strain 5A).